Here is a 238-residue protein sequence, read N- to C-terminus: Pre-protein VI (238 aa).

A propeptide spanning residues 1–33 (MDAVNFSILAPRYGSHPMMSAWSGIGTSDMNGG) is cleaved from the precursor. The amphipathic alpha-helix essential for membrane lytic activity stretch occupies residues 34-54 (AFNWGGIWSGIKNFGSNVKNW). An involved in endosomal membrane lysis region spans residues 36-53 (NWGGIWSGIKNFGSNVKN). An interaction with hexon protein region spans residues 48-74 (GSNVKNWGSRAWNSQTGKLLRQKLNDT). A Nuclear export signal motif is present at residues 67 to 76 (LRQKLNDTKV). The short motif at 153-156 (PPSY) is the PPXY motif element. The interval 187–212 (TLELKPSDQPPPYSPQSSNMPVTAPV) is disordered. A Nuclear export signal motif is present at residues 219–230 (GTLANIVGVGLS). An interaction with hexon protein region spans residues 221–227 (LANIVGV). Positions 228–238 (GLSNVKRRRCF) are binds to importin alpha/beta, involved in hexon nuclear import. The short motif at 233–236 (KRRR) is the Nuclear localization signal element.

This sequence belongs to the adenoviridae protein VI family. Interacts with hexon protein; this interaction allows nuclear import of hexon trimers and possibly pre-capsid assembly. Interacts (via C-terminal NLS) with importin alpha/beta. In terms of assembly, interacts (via PPxY motif) with host NEDD4 ubiquitine ligase; this interaction might play a role in virus intracellular transport during entry. Part of a complex composed of the core-capsid bridging protein, the endosome lysis protein VI and the hexon-linking protein VIII; these interactions bridge the virus core to the capsid. Interacts with peripentonal hexons; this interaction stabilizes the capsid by gluing two peripentonal hexons together and joining them with an adjacent group-of-nine hexon. As to quaternary structure, heterodimer with the viral protease; disulfide-linked. Interacts with the viral protease. Post-translationally, ubiquitinated by Nedd4 following partial capsid disassembly; which might play a role in intracellular virus movement during entry. Contains the major nuclear import and export signals. Proteolytically removed during virion maturation. The processing of the C-terminus turns the precursor into a mature viral structural protein and abrogates its ability to promote hexon import and act as a potential chaperone protein.

Its subcellular location is the host nucleus. The protein resides in the host cytoplasm. It is found in the virion. During virus assembly, promotes hexon trimers nuclear import through nuclear pore complexes via an importin alpha/beta-dependent mechanism. By analogy to herpesviruses capsid assembly, might act as a chaperone to promote the formation of the icosahedral capsid. Its function is as follows. Structural component of the virion that provides increased stability to the particle shell through its interaction with the core-capsid bridging protein and the hexon-linking protein VIII. Fibers shedding during virus entry into host cell allows the endosome lysis protein to be exposed as a membrane-lytic peptide. Exhibits pH-independent membrane fragmentation activity and probably mediates viral rapid escape from host endosome via organellar membrane lysis. It is not clear if it then remains partially associated with the capsid and involved in the intracellular microtubule-dependent transport of capsid to the nucleus, or if it is lost during endosomal penetration. Functionally, cofactor that activates the viral protease. Binds to viral protease in a 1:1 ratio. The polypeptide is Pre-protein VI (Canis lupus familiaris (Dog)).